The chain runs to 533 residues: (E)-beta-farnesene synthase (533 aa).

Residues Asp286, Asp290, Asn430, Ser434, and Glu438 each coordinate Mg(2+). Residues Asp286–Asp290 carry the DDXXD motif motif.

Belongs to the terpene synthase family. Mg(2+) is required as a cofactor. It depends on Co(2+) as a cofactor. Mn(2+) serves as cofactor.

Its subcellular location is the cytoplasm. It carries out the reaction (2E,6E)-farnesyl diphosphate = (E)-beta-farnesene + diphosphate. It participates in secondary metabolite biosynthesis; terpenoid biosynthesis. Its function is as follows. Sesquiterpene cyclase catalyzing the production of beta-farnesene and alpha-bergamotene in equal amounts from farnesyl diphosphate. Involved in indirect defense by producing volatile signals attracting natural enemies of herbivores. This chain is (E)-beta-farnesene synthase, found in Zea mays subsp. huehuetenangensis (San Antonio Huista teosinte).